A 175-amino-acid chain; its full sequence is Probable DNA replication complex GINS protein PSF2 (175 aa).

It belongs to the GINS2/PSF2 family. In terms of assembly, component of the GINS complex which is a heterotetramer of SLD5, PSF1, PSF2 and PSF3.

The protein resides in the nucleus. Functionally, the GINS complex plays an essential role in the initiation of DNA replication. This is Probable DNA replication complex GINS protein PSF2 from Encephalitozoon cuniculi (strain GB-M1) (Microsporidian parasite).